The sequence spans 513 residues: Putative fucosyltransferase-like protein (513 aa).

The segment at 1–34 (MGVFSNLRGPRAGATHDEFPATNGSPSSSSSPSS) is disordered. Topologically, residues 1 to 39 (MGVFSNLRGPRAGATHDEFPATNGSPSSSSSPSSSIKRK) are cytoplasmic. The segment covering 25–34 (SPSSSSSPSS) has biased composition (low complexity). The chain crosses the membrane as a helical; Signal-anchor for type II membrane protein span at residues 40 to 60 (LSNLLPLCVALVVIAEIGFLG). The Lumenal segment spans residues 61–513 (RLDKVALVDT…PCAKFEVVFV (453 aa)). N348 and N493 each carry an N-linked (GlcNAc...) asparagine glycan.

The protein belongs to the glycosyltransferase 10 family.

It is found in the golgi apparatus. It localises to the golgi stack membrane. The protein operates within protein modification; protein glycosylation. In terms of biological role, may be involved in cell wall biosynthesis. May act as a fucosyltransferase. This chain is Putative fucosyltransferase-like protein (FUT12), found in Arabidopsis thaliana (Mouse-ear cress).